Here is a 181-residue protein sequence, read N- to C-terminus: Large ribosomal subunit protein uL5 (181 aa).

Belongs to the universal ribosomal protein uL5 family. In terms of assembly, part of the 50S ribosomal subunit; contacts the 5S rRNA and probably tRNA. Forms a bridge to the 30S subunit in the 70S ribosome.

In terms of biological role, this is one of the proteins that bind and probably mediate the attachment of the 5S RNA into the large ribosomal subunit, where it forms part of the central protuberance. In the 70S ribosome it contacts protein S13 of the 30S subunit (bridge B1b), connecting the 2 subunits; this bridge is implicated in subunit movement. May contact the P site tRNA; the 5S rRNA and some of its associated proteins might help stabilize positioning of ribosome-bound tRNAs. This chain is Large ribosomal subunit protein uL5, found in Methanococcus maripaludis (strain C7 / ATCC BAA-1331).